The following is a 232-amino-acid chain: 7-cyano-7-deazaguanine synthase 2 (232 aa).

Residue 9 to 19 (FSGGQDSTTCL) coordinates ATP. Residues C189, C198, C201, and C204 each contribute to the Zn(2+) site.

Belongs to the QueC family. The cofactor is Zn(2+).

It catalyses the reaction 7-carboxy-7-deazaguanine + NH4(+) + ATP = 7-cyano-7-deazaguanine + ADP + phosphate + H2O + H(+). The protein operates within purine metabolism; 7-cyano-7-deazaguanine biosynthesis. In terms of biological role, catalyzes the ATP-dependent conversion of 7-carboxy-7-deazaguanine (CDG) to 7-cyano-7-deazaguanine (preQ(0)). The chain is 7-cyano-7-deazaguanine synthase 2 from Pseudomonas fluorescens (strain ATCC BAA-477 / NRRL B-23932 / Pf-5).